The primary structure comprises 103 residues: Large ribosomal subunit protein uL24 (103 aa).

Belongs to the universal ribosomal protein uL24 family. As to quaternary structure, part of the 50S ribosomal subunit.

Its function is as follows. One of two assembly initiator proteins, it binds directly to the 5'-end of the 23S rRNA, where it nucleates assembly of the 50S subunit. One of the proteins that surrounds the polypeptide exit tunnel on the outside of the subunit. The sequence is that of Large ribosomal subunit protein uL24 from Listeria innocua serovar 6a (strain ATCC BAA-680 / CLIP 11262).